The primary structure comprises 113 residues: C-C motif chemokine 15 (113 aa).

The first 21 residues, 1–21 (MKVSVAALSCLMLVAVLGSQA), serve as a signal peptide directing secretion. 3 disulfide bridges follow: Cys-53-Cys-77, Cys-54-Cys-93, and Cys-64-Cys-104.

This sequence belongs to the intercrine beta (chemokine CC) family. As to quaternary structure, monomer. The N-terminal is proteolytically cleaved by proteases associated with inflammatory responses. The processed forms CCL15(22-92), CCL15(25-92) and CCL15(29-92) exhibit increase in CCR1-mediated signaling and chemotaxis assays in vitro. In terms of tissue distribution, most abundant in heart, skeletal muscle and adrenal gland. Lower levels in placenta, liver, pancreas and bone marrow. CCL15(22-92), CCL15(25-92) and CCL15(29-92) are found in high levels in synovial fluids from rheumatoid patients.

It is found in the secreted. Chemotactic factor that attracts T-cells and monocytes, but not neutrophils, eosinophils, or B-cells. Acts mainly via CC chemokine receptor CCR1. Also binds to CCR3. CCL15(22-92), CCL15(25-92) and CCL15(29-92) are more potent chemoattractants than the CCL15. This is C-C motif chemokine 15 (CCL15) from Homo sapiens (Human).